The following is a 2835-amino-acid chain: Vanchrobactin synthetase VabF (2835 aa).

The segment at glutamate 16–threonine 452 is condensation 1. The tract at residues glutamine 473–arginine 880 is adenylation 1. The Carrier 1 domain occupies alanine 988–glutamine 1062. Residue serine 1023 is modified to O-(pantetheine 4'-phosphoryl)serine. 2 condensation regions span residues tryptophan 1081–glutamine 1499 and aspartate 1539–leucine 1961. Residues glutamine 1992–arginine 2394 are adenylation 2. In terms of domain architecture, Carrier 2 spans asparagine 2503–aspartate 2578. Serine 2538 carries the O-(pantetheine 4'-phosphoryl)serine modification. Residues alanine 2601–glutamate 2821 form a thioesterase region.

Belongs to the NRP synthetase family. It depends on pantetheine 4'-phosphate as a cofactor.

The catalysed reaction is holo-[peptidyl-carrier protein] + L-arginine + ATP = L-arginyl-[peptidyl-carrier protein] + AMP + diphosphate. The enzyme catalyses holo-[peptidyl-carrier protein] + L-serine + ATP = L-seryl-[peptidyl-carrier protein] + AMP + diphosphate. Its pathway is siderophore biosynthesis. Functionally, involved in the synthesis of the siderophore vanchrobactin. Probably adenylates L-arginine via its first adenylation domain and loads it onto its first peptidyl carrier domain via a thioester linkage to the phosphopanthetheine moiety. In addition, may adenylate L-serine via its second adenylation domain and loads it onto its second peptidyl carrier domain via a thioester linkage to the phosphopanthetheine moiety. The thioesterase domain may release vanchrobactin after condensation of the siderophore components. The polypeptide is Vanchrobactin synthetase VabF (Vibrio anguillarum (Listonella anguillarum)).